The chain runs to 523 residues: Ubiquitin carboxyl-terminal hydrolase 22-A (523 aa).

The UBP-type zinc-finger motif lies at 4–121; the sequence is AGCSHVNSFK…KEEQRKAWKL (118 aa). Cys-6, His-8, Cys-46, Cys-49, Cys-59, Cys-62, Cys-67, His-72, His-76, His-82, Cys-95, and Cys-98 together coordinate Zn(2+). One can recognise a USP domain in the interval 174–518; that stretch reads RGLINLGNTC…EGYLLFYHKQ (345 aa). The Nucleophile role is filled by Cys-183. His-477 (proton acceptor) is an active-site residue.

It belongs to the peptidase C19 family. UBP8 subfamily. In terms of assembly, component of some SAGA transcription coactivator-HAT complexes.

It is found in the nucleus. It carries out the reaction Thiol-dependent hydrolysis of ester, thioester, amide, peptide and isopeptide bonds formed by the C-terminal Gly of ubiquitin (a 76-residue protein attached to proteins as an intracellular targeting signal).. In terms of biological role, histone deubiquitinating component of the transcription regulatory histone acetylation (HAT) complex SAGA. Catalyzes the deubiquitination of both histones H2A and H2B, thereby acting as a coactivator. Recruited to specific gene promoters by activators, where it is required for transcription. The sequence is that of Ubiquitin carboxyl-terminal hydrolase 22-A (usp22-a) from Xenopus laevis (African clawed frog).